The chain runs to 460 residues: MFS-type transporter PUL3 (460 aa).

8 consecutive transmembrane segments (helical) span residues 16-36 (AVTLIAVQFSFDTCVYLSSVV), 50-70 (YLFILQAVSAAVQVFFSFIIG), 81-101 (WVIIFLYFLSFVGNFLYSCAG), 113-133 (IICGAASSSGAVVYSYITAIS), 151-171 (GICMALAQLVAILFALCDFTV), 181-201 (APTFASSFIILLICVLLMFVL), 240-260 (MFLSTFFMCEVLYFMPIFLTL), and 271-291 (VAFMVSAVLGVAGSFFAPDLV). The interval 300–323 (PSTQDETDTSDNDKIEKEESEQKS) is disordered. Basic and acidic residues predominate over residues 310 to 323 (DNDKIEKEESEQKS). Transmembrane regions (helical) follow at residues 333-353 (VSLTIFALFVALIGQAFMIGA), 369-389 (IFFTAGLSITMLGYNFMGSSV), 408-428 (FIGAIAGVGKLVAPIVLAALY), and 433-453 (GLPIGVGFGMILVGISIPSLV).

The protein belongs to the major facilitator superfamily. TCR/Tet family.

Its subcellular location is the cell membrane. In terms of biological role, MFS-type transporer required for the uptake of iron via the uptake of the siderophore pulcherrimin-iron complex. The sequence is that of MFS-type transporter PUL3 from Kluyveromyces lactis (strain ATCC 8585 / CBS 2359 / DSM 70799 / NBRC 1267 / NRRL Y-1140 / WM37) (Yeast).